The chain runs to 311 residues: Apolipoprotein E (311 aa).

The first 18 residues, 1–18, serve as a signal peptide directing secretion; it reads MKVWWAVLAAAILAGCRA. Repeat copies occupy residues 74–95, 96–116, 117–138, 139–160, 161–182, 183–204, 205–226, and 227–248. Positions 74–248 are 8 X 22 AA approximate tandem repeats; it reads MLMEETMKEV…RLNEVREQVE (175 aa). The residue at position 136 (Met136) is a Methionine sulfoxide. The residue at position 140 (Ser140) is a Phosphoserine. The interval 151–161 is LDL and other lipoprotein receptors binding; the sequence is HLRKLRKRLLR. Residue 155-158 participates in heparin binding; that stretch reads LRKR. The segment at 203–283 is lipid-binding and lipoprotein association; the sequence is VATVGTLAGR…SWFEPLVEDM (81 aa). Thr205 carries O-linked (GalNAc...) threonine glycosylation. A heparin-binding site is contributed by 222–229; it reads GERLRGHL. Positions 259–311 are homooligomerization; it reads PQMRLQAEAFQARLKSWFEPLVEDMQRQWAGLVEKLQAAMPSKAPAAAPIENQ. The segment at 271 to 283 is specificity for association with VLDL; that stretch reads RLKSWFEPLVEDM.

Belongs to the apolipoprotein A1/A4/E family. Homotetramer. May interact with ABCA1; functionally associated with ABCA1 in the biogenesis of HDLs. May interact with APP/A4 amyloid-beta peptide; the interaction is extremely stable in vitro but its physiological significance is unclear. May interact with MAPT. May interact with MAP2. In the cerebrospinal fluid, interacts with secreted SORL1. Interacts with PMEL; this allows the loading of PMEL luminal fragment on ILVs to induce fibril nucleation. Post-translationally, APOE exists as multiple glycosylated and sialylated glycoforms within cells and in plasma. The extent of glycosylation and sialylation are tissue and context specific. Glycated in plasma VLDL. In terms of processing, phosphorylated by FAM20C in the extracellular medium.

It is found in the secreted. The protein resides in the extracellular space. The protein localises to the extracellular matrix. Its subcellular location is the extracellular vesicle. It localises to the endosome. It is found in the multivesicular body. Its function is as follows. APOE is an apolipoprotein, a protein associating with lipid particles, that mainly functions in lipoprotein-mediated lipid transport between organs via the plasma and interstitial fluids. APOE is a core component of plasma lipoproteins and is involved in their production, conversion and clearance. Apolipoproteins are amphipathic molecules that interact both with lipids of the lipoprotein particle core and the aqueous environment of the plasma. As such, APOE associates with chylomicrons, chylomicron remnants, very low density lipoproteins (VLDL) and intermediate density lipoproteins (IDL) but shows a preferential binding to high-density lipoproteins (HDL). It also binds a wide range of cellular receptors including the LDL receptor/LDLR and the very low-density lipoprotein receptor/VLDLR that mediate the cellular uptake of the APOE-containing lipoprotein particles. Finally, APOE also has a heparin-binding activity and binds heparan-sulfate proteoglycans on the surface of cells, a property that supports the capture and the receptor-mediated uptake of APOE-containing lipoproteins by cells. The sequence is that of Apolipoprotein E (APOE) from Oryctolagus cuniculus (Rabbit).